A 531-amino-acid polypeptide reads, in one-letter code: T-complex protein 1 subunit zeta (531 aa).

Ala2 bears the N-acetylalanine mark. The residue at position 5 (Lys5) is an N6-acetyllysine. Gly39 contributes to the ADP binding site. ATP is bound at residue Gly39. Mg(2+) is bound at residue Asp90. ADP contacts are provided by Gly91, Thr92, Thr93, Ser94, Thr158, and Lys159. Gly91, Thr92, and Thr93 together coordinate ATP. Position 199 is an N6-acetyllysine (Lys199). A Phosphoserine modification is found at Ser205. Lys251 is covalently cross-linked (Glycyl lysine isopeptide (Lys-Gly) (interchain with G-Cter in SUMO2)). 4 positions are modified to N6-acetyllysine: Lys287, Lys365, Lys377, and Lys388. An ADP-binding site is contributed by Ala411. Residues Ala411, Gly412, Asp496, and Lys501 each coordinate ATP. Asp496 is a binding site for ADP.

It belongs to the TCP-1 chaperonin family. In terms of assembly, component of the chaperonin-containing T-complex (TRiC), a hexadecamer composed of two identical back-to-back stacked rings enclosing a protein folding chamber. Each ring is made up of eight different subunits: TCP1/CCT1, CCT2, CCT3, CCT4, CCT5, CCT6A/CCT6, CCT7, CCT8. Interacts with PACRG.

It is found in the cytoplasm. The enzyme catalyses ATP + H2O = ADP + phosphate + H(+). Component of the chaperonin-containing T-complex (TRiC), a molecular chaperone complex that assists the folding of actin, tubulin and other proteins upon ATP hydrolysis. The TRiC complex mediates the folding of WRAP53/TCAB1, thereby regulating telomere maintenance. In Homo sapiens (Human), this protein is T-complex protein 1 subunit zeta (CCT6A).